We begin with the raw amino-acid sequence, 299 residues long: tRNA-cytidine(32) 2-sulfurtransferase (299 aa).

Positions Ser-56–Ser-61 match the PP-loop motif motif. 3 residues coordinate [4Fe-4S] cluster: Cys-131, Cys-134, and Cys-222.

Belongs to the TtcA family. As to quaternary structure, homodimer. It depends on Mg(2+) as a cofactor. [4Fe-4S] cluster is required as a cofactor.

It localises to the cytoplasm. It catalyses the reaction cytidine(32) in tRNA + S-sulfanyl-L-cysteinyl-[cysteine desulfurase] + AH2 + ATP = 2-thiocytidine(32) in tRNA + L-cysteinyl-[cysteine desulfurase] + A + AMP + diphosphate + H(+). Its pathway is tRNA modification. Functionally, catalyzes the ATP-dependent 2-thiolation of cytidine in position 32 of tRNA, to form 2-thiocytidine (s(2)C32). The sulfur atoms are provided by the cysteine/cysteine desulfurase (IscS) system. The protein is tRNA-cytidine(32) 2-sulfurtransferase of Xylella fastidiosa (strain M12).